Consider the following 428-residue polypeptide: 3-phosphoshikimate 1-carboxyvinyltransferase (428 aa).

The 3-phosphoshikimate site is built by lysine 22, serine 23, and arginine 27. Position 22 (lysine 22) interacts with phosphoenolpyruvate. Phosphoenolpyruvate contacts are provided by glycine 94 and arginine 122. Residues serine 168, serine 169, glutamine 170, serine 196, aspartate 315, and lysine 342 each coordinate 3-phosphoshikimate. Position 170 (glutamine 170) interacts with phosphoenolpyruvate. Aspartate 315 serves as the catalytic Proton acceptor. The phosphoenolpyruvate site is built by arginine 346, arginine 389, and lysine 414.

The protein belongs to the EPSP synthase family. In terms of assembly, monomer.

The protein localises to the cytoplasm. The catalysed reaction is 3-phosphoshikimate + phosphoenolpyruvate = 5-O-(1-carboxyvinyl)-3-phosphoshikimate + phosphate. It participates in metabolic intermediate biosynthesis; chorismate biosynthesis; chorismate from D-erythrose 4-phosphate and phosphoenolpyruvate: step 6/7. Functionally, catalyzes the transfer of the enolpyruvyl moiety of phosphoenolpyruvate (PEP) to the 5-hydroxyl of shikimate-3-phosphate (S3P) to produce enolpyruvyl shikimate-3-phosphate and inorganic phosphate. The sequence is that of 3-phosphoshikimate 1-carboxyvinyltransferase from Thiobacillus denitrificans (strain ATCC 25259 / T1).